An 85-amino-acid polypeptide reads, in one-letter code: Contulakin-Lt2 (85 aa).

Residues 1–22 (MQMAYWVMVMMMVGITAPLSEG) form the signal peptide. A propeptide spanning residues 23-61 (RKLNDAIRGLVPNDLTPQLLQSLVSRRHRVFHLDNTYLK) is cleaved from the precursor. An intrachain disulfide couples Cys-65 to Cys-70. The propeptide occupies 76 to 85 (RRRDLKKRNK).

The protein belongs to the conotoxin C superfamily. In terms of tissue distribution, expressed by the venom duct.

Its subcellular location is the secreted. Acts as an agonist of neurotensin receptors. It binds to human neurotensin type 1 receptor (NTSR1), rat neurotensin types 1 and 2 receptors (NTSR1/NTSR2) and mouse neurotensin type 3 receptor (SORT1). The polypeptide is Contulakin-Lt2 (Conus litteratus (Lettered cone)).